A 314-amino-acid polypeptide reads, in one-letter code: Ferric-anguibactin transport system permease protein FatD (314 aa).

10 helical membrane passes run 1 to 21 (MTFR…FFGA), 49 to 69 (VALI…QHIV), 76 to 96 (PGTT…IVML), 103 to 123 (ERMF…IAII), 132 to 152 (ALVP…AEFY), 180 to 200 (IIFL…RFTV), 207 to 226 (IASN…LILV), 230 to 252 (VAVT…NLVA), 265 to 285 (IVAL…RVVL), and 288 to 308 (FEVP…LAFL).

It belongs to the binding-protein-dependent transport system permease family. FecCD subfamily. In terms of assembly, part of an iron transport system composed of the outer membrane receptor FatA, the periplasmic binding protein FatB and the inner membrane proteins FatC and FatD.

The protein resides in the cell inner membrane. Its function is as follows. Involved in the uptake of iron in complex with the siderophore anguibactin. Responsible for the translocation of ferric-anguibactin across the cytoplasmic membrane. This Vibrio anguillarum (strain ATCC 68554 / 775) (Listonella anguillarum) protein is Ferric-anguibactin transport system permease protein FatD.